The sequence spans 430 residues: 3-phosphoshikimate 1-carboxyvinyltransferase (430 aa).

Positions 23, 24, and 28 each coordinate 3-phosphoshikimate. Lysine 23 provides a ligand contact to phosphoenolpyruvate. Phosphoenolpyruvate contacts are provided by glycine 95 and arginine 123. Serine 169, glutamine 171, aspartate 315, and lysine 342 together coordinate 3-phosphoshikimate. Glutamine 171 contributes to the phosphoenolpyruvate binding site. Aspartate 315 serves as the catalytic Proton acceptor. Phosphoenolpyruvate is bound by residues arginine 346 and arginine 388.

It belongs to the EPSP synthase family. As to quaternary structure, monomer.

The protein localises to the cytoplasm. The enzyme catalyses 3-phosphoshikimate + phosphoenolpyruvate = 5-O-(1-carboxyvinyl)-3-phosphoshikimate + phosphate. It participates in metabolic intermediate biosynthesis; chorismate biosynthesis; chorismate from D-erythrose 4-phosphate and phosphoenolpyruvate: step 6/7. Its function is as follows. Catalyzes the transfer of the enolpyruvyl moiety of phosphoenolpyruvate (PEP) to the 5-hydroxyl of shikimate-3-phosphate (S3P) to produce enolpyruvyl shikimate-3-phosphate and inorganic phosphate. The polypeptide is 3-phosphoshikimate 1-carboxyvinyltransferase (Streptococcus pyogenes serotype M6 (strain ATCC BAA-946 / MGAS10394)).